The primary structure comprises 460 residues: ATP synthase subunit beta (460 aa).

Position 150–157 (150–157 (GGAGVGKT)) interacts with ATP.

Belongs to the ATPase alpha/beta chains family. In terms of assembly, F-type ATPases have 2 components, CF(1) - the catalytic core - and CF(0) - the membrane proton channel. CF(1) has five subunits: alpha(3), beta(3), gamma(1), delta(1), epsilon(1). CF(0) has three main subunits: a(1), b(2) and c(9-12). The alpha and beta chains form an alternating ring which encloses part of the gamma chain. CF(1) is attached to CF(0) by a central stalk formed by the gamma and epsilon chains, while a peripheral stalk is formed by the delta and b chains.

It localises to the cell inner membrane. It carries out the reaction ATP + H2O + 4 H(+)(in) = ADP + phosphate + 5 H(+)(out). In terms of biological role, produces ATP from ADP in the presence of a proton gradient across the membrane. The catalytic sites are hosted primarily by the beta subunits. In Pectobacterium atrosepticum (strain SCRI 1043 / ATCC BAA-672) (Erwinia carotovora subsp. atroseptica), this protein is ATP synthase subunit beta.